Consider the following 511-residue polypeptide: Ribonuclease Y (511 aa).

The chain crosses the membrane as a helical span at residues 3 to 23; that stretch reads VGILIGIIILGVVGFIQYTLI. In terms of domain architecture, KH spans 201–286; it reads TVHVVALPND…EMVERAIKDV (86 aa). Positions 327 to 420 constitute an HD domain; sequence VLKHSIEVSY…VQAADAISAA (94 aa).

It belongs to the RNase Y family.

Its subcellular location is the cell membrane. Endoribonuclease that initiates mRNA decay. The chain is Ribonuclease Y from Clostridium perfringens (strain SM101 / Type A).